Reading from the N-terminus, the 355-residue chain is UDP-N-acetylglucosamine--N-acetylmuramyl-(pentapeptide) pyrophosphoryl-undecaprenol N-acetylglucosamine transferase (355 aa).

UDP-N-acetyl-alpha-D-glucosamine is bound by residues 15-17 (TGG), Asn-127, Arg-163, Ser-191, Ile-244, 263-268 (ALTVSE), and Gln-288.

The protein belongs to the glycosyltransferase 28 family. MurG subfamily.

The protein resides in the cell inner membrane. The enzyme catalyses di-trans,octa-cis-undecaprenyl diphospho-N-acetyl-alpha-D-muramoyl-L-alanyl-D-glutamyl-meso-2,6-diaminopimeloyl-D-alanyl-D-alanine + UDP-N-acetyl-alpha-D-glucosamine = di-trans,octa-cis-undecaprenyl diphospho-[N-acetyl-alpha-D-glucosaminyl-(1-&gt;4)]-N-acetyl-alpha-D-muramoyl-L-alanyl-D-glutamyl-meso-2,6-diaminopimeloyl-D-alanyl-D-alanine + UDP + H(+). It functions in the pathway cell wall biogenesis; peptidoglycan biosynthesis. In terms of biological role, cell wall formation. Catalyzes the transfer of a GlcNAc subunit on undecaprenyl-pyrophosphoryl-MurNAc-pentapeptide (lipid intermediate I) to form undecaprenyl-pyrophosphoryl-MurNAc-(pentapeptide)GlcNAc (lipid intermediate II). The sequence is that of UDP-N-acetylglucosamine--N-acetylmuramyl-(pentapeptide) pyrophosphoryl-undecaprenol N-acetylglucosamine transferase from Salmonella paratyphi B (strain ATCC BAA-1250 / SPB7).